Consider the following 415-residue polypeptide: Membrane-bound ghrelin O-acyltransferase mboat4 (415 aa).

Topologically, residues 1-6 (MIDLLW) are lumenal. Residues 7-28 (ISSDGHPQLFYQFINIPFAFLF) traverse the membrane as a helical segment. At 29–42 (HCLSSQGHLSIINR) the chain is on the cytoplasmic side. The helical transmembrane segment at 43–58 (YVYLAMGGFMLAIATM) threads the bilayer. Over 59-61 (GPY) the chain is Lumenal. A helical membrane pass occupies residues 62–78 (SSLLFLSAIKLLLLIHY). Topologically, residues 79-84 (IHPMHL) are cytoplasmic. The chain crosses the membrane as a helical span at residues 85–103 (HRWILGLQMCWQTCWHLYV). Residues 104–122 (QYQIYWLQEAPDSRLLLAI) lie on the Lumenal side of the membrane. A helical transmembrane segment spans residues 123–138 (SALMLMTQRISSLSLD). The Cytoplasmic portion of the chain corresponds to 139-193 (FQEGTISNQSILIPFLTYSLYFPALLGGPLCSFNAFVQSVERQHTSMTSYLGNLT). Residues 194-214 (SKISQVIVLVWIKQLFSELLK) form a helical membrane-spanning segment. Over 215 to 227 (SATFNIDSVCLDV) the chain is Lumenal. A helical membrane pass occupies residues 228 to 247 (LWIWIFSLTLRLNYYAHWKM). The Cytoplasmic portion of the chain corresponds to 248-312 (SECVNNAAGL…RKIVFNRTSR (65 aa)). Active-site residues include asparagine 295 and histidine 326. A helical transmembrane segment spans residues 313-326 (SPLFMTFGFSALWH). Over 327–328 (GL) the chain is Lumenal. A helical membrane pass occupies residues 329–345 (HPGQILGFLIWAVTVQA). The Cytoplasmic segment spans residues 346-364 (DYKLHRFSHPKLNSLWRKR). Residues 365-385 (LYVCVNWAFTQLTVACVVVCV) traverse the membrane as a helical segment. At 386–394 (ELQSLASVK) the chain is on the lumenal side. A helical transmembrane segment spans residues 395–415 (LLWSSCIAVFPLLSALILIIL).

This sequence belongs to the membrane-bound acyltransferase family. As to quaternary structure, monomer. Not glycosylated.

The protein localises to the endoplasmic reticulum membrane. It carries out the reaction octanoyl-CoA + L-seryl-[protein] = O-octanoyl-L-seryl-[protein] + CoA. The catalysed reaction is decanoyl-CoA + L-seryl-[protein] = O-decanoyl-L-seryl-[protein] + CoA. The enzyme catalyses L-seryl-[protein] + acetyl-CoA = O-acetyl-L-seryl-[protein] + CoA. It catalyses the reaction L-seryl-[protein] + butanoyl-CoA = O-butanoyl-L-seryl-[protein] + CoA. It carries out the reaction pentanoyl-CoA + L-seryl-[protein] = O-pentanoyl-L-seryl-[protein] + CoA. The catalysed reaction is hexanoyl-CoA + L-seryl-[protein] = O-hexanoyl-L-seryl-[protein] + CoA. The enzyme catalyses heptanoyl-CoA + L-seryl-[protein] = O-heptanoyl-L-seryl-[protein] + CoA. It catalyses the reaction nonanoyl-CoA + L-seryl-[protein] = O-nonanoyl-L-seryl-[protein] + CoA. It carries out the reaction L-seryl-[protein] + dodecanoyl-CoA = O-dodecanoyl-L-seryl-[protein] + CoA. The catalysed reaction is L-seryl-[protein] + tetradecanoyl-CoA = O-tetradecanoyl-L-seryl-[protein] + CoA. The enzyme catalyses a fatty acyl-CoA + L-seryl-[protein] = O-fatty acyl-L-seryl-[protein] + CoA. Catalyzes ghrelin acylation at 'Ser-3' using preferentially octanoyl-CoA, hexanoyl-CoA and decanoyl-CoA as acyl-CoA donors leading to ghrelin activity. In vitro uses also acyl-CoA donors of different lengths from short-chain (C2) to long-chain fatty acids (C16) knowing that acyl-CoA donors from butanoyl-CoA (C4) to dodecanoyl-CoA (C12) are more efficient compared to longer acyl-CoA donors, such as myristoyl-CoA (C14) and palmitoyl-CoA (C16) that are not efficient. The sequence is that of Membrane-bound ghrelin O-acyltransferase mboat4 from Danio rerio (Zebrafish).